The following is a 62-amino-acid chain: Phospholipase A2 superbin a (62 aa).

Residues Tyr28, Gly30, and Gly32 each contribute to the Ca(2+) site. A disulfide bridge connects residues Cys29 and Cys45. His48 is an active-site residue. A Ca(2+)-binding site is contributed by Asp49.

Requires Ca(2+) as cofactor. Expressed by the venom gland.

It localises to the secreted. It carries out the reaction a 1,2-diacyl-sn-glycero-3-phosphocholine + H2O = a 1-acyl-sn-glycero-3-phosphocholine + a fatty acid + H(+). In terms of biological role, snake venom phospholipase A2 (PLA2) that inhibits collagen-induced platelet aggregation. In terms of inhibition of platelet aggregation, superbin a is more potent as superbin b, c, and d. PLA2 catalyzes the calcium-dependent hydrolysis of the 2-acyl groups in 3-sn-phosphoglycerides. In Austrelaps superbus (Lowland copperhead snake), this protein is Phospholipase A2 superbin a.